Consider the following 166-residue polypeptide: Ribosome-binding factor A (166 aa).

Residues Leu-122 to Gly-166 are disordered. The segment covering His-128–Asp-138 has biased composition (basic and acidic residues). The span at Thr-139–Asp-150 shows a compositional bias: acidic residues. Basic and acidic residues predominate over residues Ala-151 to Gly-166.

This sequence belongs to the RbfA family. Monomer. Binds 30S ribosomal subunits, but not 50S ribosomal subunits or 70S ribosomes.

It is found in the cytoplasm. Functionally, one of several proteins that assist in the late maturation steps of the functional core of the 30S ribosomal subunit. Associates with free 30S ribosomal subunits (but not with 30S subunits that are part of 70S ribosomes or polysomes). Required for efficient processing of 16S rRNA. May interact with the 5'-terminal helix region of 16S rRNA. This Saccharopolyspora erythraea (strain ATCC 11635 / DSM 40517 / JCM 4748 / NBRC 13426 / NCIMB 8594 / NRRL 2338) protein is Ribosome-binding factor A.